The primary structure comprises 451 residues: Endosomal transmembrane epsin interactor 1 (451 aa).

The signal sequence occupies residues 1–29; that stretch reads MILLVNLFVLLSVVCILLNLAGFILGCQG. The Lumenal segment spans residues 30 to 85; that stretch reads AQFVSSVPRCDLVDLGEGKICFCCEEFQPAKCTDKENALKLFPVQPCSAVHLLLKK. A helical transmembrane segment spans residues 86 to 106; the sequence is VLFALCALNALTTTVCLVAAA. Over 107-451 the chain is Cytoplasmic; that stretch reads LRYLQIFASR…LIGVIRETVL (345 aa). The mediates interaction with EPN1 stretch occupies residues 107 to 451; it reads LRYLQIFASR…LIGVIRETVL (345 aa). Short sequence motifs (PPxY; mediates interaction with ITCH) lie at residues 148 to 151 and 194 to 197; these read PPSY and PPPY. A compositionally biased stretch (polar residues) spans 204-213; that stretch reads TDQEQESSFQ. Positions 204-224 are disordered; it reads TDQEQESSFQMPEGPETAASP. Lysine 274 participates in a covalent cross-link: Glycyl lysine isopeptide (Lys-Gly) (interchain with G-Cter in ubiquitin). Residue serine 275 is modified to Phosphoserine. Lysine 365 participates in a covalent cross-link: Glycyl lysine isopeptide (Lys-Gly) (interchain with G-Cter in ubiquitin).

The protein belongs to the ENTREP family. Interacts with ITCH; enhances the ubiquitination of CXCR4 by ITCH and the subsequent endocytosis and desensitization of the receptor. Interacts with EPN1.

The protein localises to the early endosome membrane. Its subcellular location is the late endosome membrane. It is found in the recycling endosome membrane. It localises to the cell membrane. Functions as an activator of the E3 ubiquitin protein ligase ITCH in the ubiquitination of the CXCL12-activated CXCR4 receptor. Thereby, triggers CXCR4 endocytosis and desensitization, negatively regulating the CXCL12/CXCR4 signaling pathway. This is Endosomal transmembrane epsin interactor 1 from Mus musculus (Mouse).